The chain runs to 291 residues: tRNA U34 carboxymethyltransferase (291 aa).

Carboxy-S-adenosyl-L-methionine-binding positions include Lys61, Trp75, Lys80, Gly100, 122–124 (DPS), 149–150 (VE), Tyr169, and Arg284.

This sequence belongs to the class I-like SAM-binding methyltransferase superfamily. CmoB family. As to quaternary structure, homotetramer.

It catalyses the reaction carboxy-S-adenosyl-L-methionine + 5-hydroxyuridine(34) in tRNA = 5-carboxymethoxyuridine(34) in tRNA + S-adenosyl-L-homocysteine + H(+). In terms of biological role, catalyzes carboxymethyl transfer from carboxy-S-adenosyl-L-methionine (Cx-SAM) to 5-hydroxyuridine (ho5U) to form 5-carboxymethoxyuridine (cmo5U) at position 34 in tRNAs. In Campylobacter jejuni subsp. doylei (strain ATCC BAA-1458 / RM4099 / 269.97), this protein is tRNA U34 carboxymethyltransferase.